A 217-amino-acid chain; its full sequence is MLDISIAIDGPAGAGKSTIAKIIGNKLNIMYINTGSMYRAVTLMALKNNIEPYDIESLKALINSMNISFNGNNIIVNGKDLEEDIRMPIINNNVSKYAAVEEVRELLVSMQQNISKKYNVVMDGRDIGTVVLKDAPYKFFITASAEVRAKRRLKELKEKGININFRDVLKEIKERDYIDSNRKVNPLKQSKDAILIDTSNFTIEEVVDKICNIIKKD.

Residue G10–T18 participates in ATP binding.

This sequence belongs to the cytidylate kinase family. Type 1 subfamily.

The protein localises to the cytoplasm. It catalyses the reaction CMP + ATP = CDP + ADP. It carries out the reaction dCMP + ATP = dCDP + ADP. The sequence is that of Cytidylate kinase from Clostridium botulinum (strain Okra / Type B1).